The following is an 861-amino-acid chain: MAAVIRKLLPFPSPNPKRDNRESDDDDETSSGYRIEYSFASEYKGPLIANVPRALPVEVDQIPTALPVSFSSLRSGISYPVAPLVMTKDTKRPPDSGIEKKNGFVDSAAGSSVVLIGRDVVSGSSSSSSSKRLDVPEEVKSPADFRLSPSSPLSASAREEDHLDDDRVSDVGPRAVRFVEPFQSSECDESSYVSDGESIAATHRAERKGKRGSCYRCQLGNRFTEKEVCIVCDAKYCFNCVRRAMGAMPEGRKCQACIGYRIDESKRASLGKCSRMLKRHLTDSELRQVMNAEITCKANQLPSRLIIVNDKPLSEDELYTLQTCPNPPKKLKPGHYWYDKVAGYWGKIGEKPSQIISPNNSIGGYISEKVSNGDTEIYINGREITKPELTMLKWAGVQCEGKPHFWVDSDGSYREEGQKHPIGNIWSKKRAKIACAVFSLPVPPASSAVEPYDVPLYEQKMLNKLLLIGSEKGGATTIYKQARSLYNVSFSLEDRERIKFIIQTNLYTYLAMVLEAHERFEKEMSNDQSSGNVGDETSAKPGNSINPRLKHFSDWVLKEKEDGNLKIFPPSSRENAQTVADLWRVPAIQATYKRLRDTLPRNAVYFLERILEISRSEYDPSDMDILQAEGLSSMEGLSCVDFSFPSTSQEESLESDYQHDTDMKYQLIRLNPRSLGENWKLLEMFEDADLVIFCVSLTDYAENIEDGEGNIVNKMLATKQLFENMVTHPSLANKRFLLVLTKFDLLEEKIEEVPLRTCEWFEDFNPLISQNQTSRHNPPMAQRAFHYIGYKFKRLYDSILEPVNMRGRSFKPKLFVCQVSLESDTVDNALRYAREILKWHVEETSMFQEMSTTSIEASSSS.

Disordered regions lie at residues 1 to 32 and 121 to 168; these read MAAVIRKLLPFPSPNPKRDNRESDDDDETSSG and VSGS…DDRV. Basic and acidic residues predominate over residues 131–143; sequence KRLDVPEEVKSPA. Positions 146-156 are enriched in low complexity; that stretch reads RLSPSSPLSAS. The segment covering 157 to 168 has biased composition (basic and acidic residues); sequence AREEDHLDDDRV. Residues 204-211 carry the Nuclear localization signal motif; sequence RAERKGKR. The RING-type; degenerate zinc-finger motif lies at 214 to 257; sequence CYRCQLGNRFTEKEVCIVCDAKYCFNCVRRAMGAMPEGRKCQAC. A G-alpha domain is found at 461–853; sequence MLNKLLLIGS…TSMFQEMSTT (393 aa). Residues 464 to 477 are G1 motif; it reads KLLLIGSEKGGATT. 469-477 serves as a coordination point for GTP; it reads GSEKGGATT. A Ca(2+)-binding site is contributed by threonine 476. The disordered stretch occupies residues 523 to 545; it reads EMSNDQSSGNVGDETSAKPGNSI. 624–632 lines the GTP pocket; it reads DILQAEGLS. The G2 motif stretch occupies residues 624–632; sequence DILQAEGLS. Residue serine 632 participates in Ca(2+) binding. Residues 665 to 674 form a G3 motif region; sequence YQLIRLNPRS. The G4 motif stretch occupies residues 737–744; the sequence is LLVLTKFD. 741-744 provides a ligand contact to GTP; that stretch reads TKFD. Residues 818 to 823 are G5 motif; sequence QVSLES.

This sequence belongs to the G-alpha family. XLG subfamily. In terms of assembly, interacts with GB1. Component of a G-protein complex at least composed of XLG2 and GB1. Interacts with RTV1. It depends on Ca(2+) as a cofactor. Ubiquitous. Strongly expressed in vascular tissues, root and shoot meristems and lateral root primordia.

The protein localises to the nucleus. Functionally, guanine nucleotide-binding proteins (G proteins) are involved as modulators or transducers in various transmembrane signaling systems. Binds GTP with specificity. Plays a role in the root morphogenesis by regulation of the cell proliferation. Acts as a positive regulator in resistance to pathogen that triggers the salicylic acid (SA) pathway. Promotes the DNA binding activity of RTV1 specifically to promoter regions of FT and SOC1 in vivo leading to the activation of floral integrator genes. The sequence is that of Extra-large guanine nucleotide-binding protein 2 (XLG2) from Arabidopsis thaliana (Mouse-ear cress).